The chain runs to 139 residues: MKKGVLLNADVSAVVSRLGHTDQIVICDAGLPIPAATQRIDLALTQGVPTFLQVLGVVTQEMQVESAILAEEIVKQNPQLHRALLAQLTELGQHQGNTISVSYISHSAFKAQTEHSRAVIRSGECSPYANVILCAGVTF.

H20 functions as the Proton donor in the catalytic mechanism. Substrate-binding positions include D28, H106, and 128-130; that span reads YAN.

The protein belongs to the RbsD / FucU family. RbsD subfamily. In terms of assembly, homodecamer.

It is found in the cytoplasm. The catalysed reaction is beta-D-ribopyranose = beta-D-ribofuranose. Its pathway is carbohydrate metabolism; D-ribose degradation; D-ribose 5-phosphate from beta-D-ribopyranose: step 1/2. Catalyzes the interconversion of beta-pyran and beta-furan forms of D-ribose. The sequence is that of D-ribose pyranase from Serratia proteamaculans (strain 568).